The sequence spans 504 residues: Arabinose import ATP-binding protein AraG (504 aa).

ABC transporter domains lie at 8-243 and 256-499; these read LSFR…MVGR and YGEE…MPKV. Residue 40–47 coordinates ATP; sequence GENGAGKS.

It belongs to the ABC transporter superfamily. Arabinose importer (TC 3.A.1.2.2) family. The complex is composed of two ATP-binding proteins (AraG), two transmembrane proteins (AraH) and a solute-binding protein (AraF).

Its subcellular location is the cell inner membrane. It carries out the reaction L-arabinose(out) + ATP + H2O = L-arabinose(in) + ADP + phosphate + H(+). Its function is as follows. Part of the ABC transporter complex AraFGH involved in arabinose import. Responsible for energy coupling to the transport system. This is Arabinose import ATP-binding protein AraG from Shigella flexneri.